A 102-amino-acid polypeptide reads, in one-letter code: Turripeptide OL55-like (102 aa).

Contains 8 disulfide bonds. Expressed by the venom duct.

The protein localises to the secreted. In terms of biological role, acts as a neurotoxin by inhibiting an ion channel. In Lophiotoma acuta (Marbled turris), this protein is Turripeptide OL55-like.